The sequence spans 151 residues: UPF0735 ACT domain-containing protein SSP1116 (151 aa).

One can recognise an ACT domain in the interval 74-149; the sequence is TLILYVNDIV…HVSKVELISM (76 aa).

The protein belongs to the UPF0735 family.

This Staphylococcus saprophyticus subsp. saprophyticus (strain ATCC 15305 / DSM 20229 / NCIMB 8711 / NCTC 7292 / S-41) protein is UPF0735 ACT domain-containing protein SSP1116.